The sequence spans 485 residues: Argininosuccinate lyase (485 aa).

It belongs to the lyase 1 family. Argininosuccinate lyase subfamily.

The protein localises to the cytoplasm. The catalysed reaction is 2-(N(omega)-L-arginino)succinate = fumarate + L-arginine. It functions in the pathway amino-acid biosynthesis; L-arginine biosynthesis; L-arginine from L-ornithine and carbamoyl phosphate: step 3/3. The protein is Argininosuccinate lyase of Paracidovorax citrulli (strain AAC00-1) (Acidovorax citrulli).